The following is a 303-amino-acid chain: UDP-3-O-acyl-N-acetylglucosamine deacetylase (303 aa).

Positions 79, 238, and 242 each coordinate Zn(2+). H265 (proton donor) is an active-site residue.

This sequence belongs to the LpxC family. The cofactor is Zn(2+).

It carries out the reaction a UDP-3-O-[(3R)-3-hydroxyacyl]-N-acetyl-alpha-D-glucosamine + H2O = a UDP-3-O-[(3R)-3-hydroxyacyl]-alpha-D-glucosamine + acetate. Its pathway is glycolipid biosynthesis; lipid IV(A) biosynthesis; lipid IV(A) from (3R)-3-hydroxytetradecanoyl-[acyl-carrier-protein] and UDP-N-acetyl-alpha-D-glucosamine: step 2/6. Functionally, catalyzes the hydrolysis of UDP-3-O-myristoyl-N-acetylglucosamine to form UDP-3-O-myristoylglucosamine and acetate, the committed step in lipid A biosynthesis. In Pseudoalteromonas translucida (strain TAC 125), this protein is UDP-3-O-acyl-N-acetylglucosamine deacetylase.